The primary structure comprises 389 residues: Inactive serine/threonine-protein kinase ZRK12 (389 aa).

One can recognise a Protein kinase domain in the interval 41-342 (SADEIRKATN…ETQFDSHQDI (302 aa)). ATP is bound by residues 47-55 (KATNNFGVS) and Lys-84. Position 129 is a phosphotyrosine (Tyr-129). Thr-214 is modified (phosphothreonine). Tyr-222 carries the phosphotyrosine modification.

It belongs to the protein kinase superfamily. Ser/Thr protein kinase family.

Functionally, together with RPP13L4/ZAR1, involved in the regulation of the ambient temperature-sensitive intersection of growth and immune response in the absence of pathogens. The polypeptide is Inactive serine/threonine-protein kinase ZRK12 (Arabidopsis thaliana (Mouse-ear cress)).